Reading from the N-terminus, the 602-residue chain is UvrABC system protein C (602 aa).

A GIY-YIG domain is found at 17-94 (KTSGCYKMYS…IKKYKPTYNI (78 aa)). A UVR domain is found at 199–234 (SKLLNDIEIKMKEVIMKENFEAAIKLKETKKSLIEI).

This sequence belongs to the UvrC family. In terms of assembly, interacts with UvrB in an incision complex.

The protein localises to the cytoplasm. Its function is as follows. The UvrABC repair system catalyzes the recognition and processing of DNA lesions. UvrC both incises the 5' and 3' sides of the lesion. The N-terminal half is responsible for the 3' incision and the C-terminal half is responsible for the 5' incision. This is UvrABC system protein C from Borrelia duttonii (strain Ly).